The sequence spans 111 residues: Movement protein TGB2 (111 aa).

The Cytoplasmic segment spans residues 1–16 (MSSHQNFLTPPPDHSK). The helical transmembrane segment at 17-37 (AILAVAVGVGLAIVLHFSLSY) threads the bilayer. The Lumenal portion of the chain corresponds to 38–72 (KLPSPGDNIHSLPFGGTYRDGTKSIIYNSPHRGPG). Residues 73 to 93 (QSGALPIITVFAIIECTLHVL) traverse the membrane as a helical segment. At 94–111 (RKRDNPVRPQHSDCPNCS) the chain is on the cytoplasmic side.

It belongs to the Tymovirales TGBp2 protein family.

It localises to the host endoplasmic reticulum membrane. In terms of biological role, plays a role in viral cell-to-cell propagation, by facilitating genome transport to neighboring plant cells through plasmosdesmata,. This is Movement protein TGB2 from Carica papaya (Papaya).